We begin with the raw amino-acid sequence, 380 residues long: MTSTRKTNPLMKLINHSLIDLPTPSNISAWWNFGSLLGACLIIQITTGLFLAMHYSPDASTAFSSIAHITRDVNYGWMIRHLHANGASMFFICLFLHIGRGLYYGSFTHLETWNIGIILLFTTMMTAFMGYVLPWGQMSFWGATVITNLLSAIPYIGTDLVQWVWGGYSVNSPTLTRFFTLHFMLPFIITALTTLHLLFLHETGSNNPLGIPSHSDKITFHPYYTIKDILGLLLFLLALMTLTLLSPDLLSDPDNYTLANPLSTPPHIKPEWYFLFAYAILRSVPNKLGGVMALMLSILILTTIPALHMSKQQSMTFRPLSQFLYWLLIADLLILTWIGGQPVSYPFITISQVASTLYFTTILLLMPASSLIENHMLKWT.

The next 4 helical transmembrane spans lie at 33 to 53, 77 to 98, 113 to 133, and 178 to 198; these read FGSL…FLAM, WMIR…FLHI, WNIG…GYVL, and FFTL…LHLL. The heme b site is built by histidine 83 and histidine 97. Positions 182 and 196 each coordinate heme b. Residue histidine 201 participates in a ubiquinone binding. 4 helical membrane-spanning segments follow: residues 226 to 246, 288 to 308, 320 to 340, and 347 to 367; these read IKDI…TLLS, LGGV…PALH, LSQF…WIGG, and FITI…LLMP.

This sequence belongs to the cytochrome b family. The cytochrome bc1 complex contains 11 subunits: 3 respiratory subunits (MT-CYB, CYC1 and UQCRFS1), 2 core proteins (UQCRC1 and UQCRC2) and 6 low-molecular weight proteins (UQCRH/QCR6, UQCRB/QCR7, UQCRQ/QCR8, UQCR10/QCR9, UQCR11/QCR10 and a cleavage product of UQCRFS1). This cytochrome bc1 complex then forms a dimer. Requires heme b as cofactor.

Its subcellular location is the mitochondrion inner membrane. Its function is as follows. Component of the ubiquinol-cytochrome c reductase complex (complex III or cytochrome b-c1 complex) that is part of the mitochondrial respiratory chain. The b-c1 complex mediates electron transfer from ubiquinol to cytochrome c. Contributes to the generation of a proton gradient across the mitochondrial membrane that is then used for ATP synthesis. This Pongo abelii (Sumatran orangutan) protein is Cytochrome b (MT-CYB).